A 413-amino-acid chain; its full sequence is uncharacterized protein (413 aa).

Positions 1 to 22 (MKKSKASALLWLFSLVGFMLHA) are cleaved as a signal peptide.

It is found in the periplasm. Functionally, may be involved in ulvan degradation. Ulvan is the main polysaccharide component of the Ulvales (green seaweed) cell wall. It is composed of disaccharide building blocks comprising 3-sulfated rhamnose (Rha3S) linked to D-glucuronic acid (GlcA), L-iduronic acid (IduA), or D-xylose (Xyl). This is an uncharacterized protein from Formosa agariphila (strain DSM 15362 / KCTC 12365 / LMG 23005 / KMM 3901 / M-2Alg 35-1).